A 439-amino-acid chain; its full sequence is Ribosomal protein uS12 methylthiotransferase RimO (439 aa).

In terms of domain architecture, MTTase N-terminal spans Gly6–Pro116. 6 residues coordinate [4Fe-4S] cluster: Cys15, Cys51, Cys80, Cys148, Cys152, and Cys155. In terms of domain architecture, Radical SAM core spans Leu134–Ser371. A TRAM domain is found at Gln374 to Val439.

This sequence belongs to the methylthiotransferase family. RimO subfamily. The cofactor is [4Fe-4S] cluster.

It localises to the cytoplasm. It carries out the reaction L-aspartate(89)-[ribosomal protein uS12]-hydrogen + (sulfur carrier)-SH + AH2 + 2 S-adenosyl-L-methionine = 3-methylsulfanyl-L-aspartate(89)-[ribosomal protein uS12]-hydrogen + (sulfur carrier)-H + 5'-deoxyadenosine + L-methionine + A + S-adenosyl-L-homocysteine + 2 H(+). Functionally, catalyzes the methylthiolation of an aspartic acid residue of ribosomal protein uS12. This Hahella chejuensis (strain KCTC 2396) protein is Ribosomal protein uS12 methylthiotransferase RimO.